The sequence spans 284 residues: 2-dehydro-3-deoxyphosphooctonate aldolase (284 aa).

The protein belongs to the KdsA family.

The protein resides in the cytoplasm. It carries out the reaction D-arabinose 5-phosphate + phosphoenolpyruvate + H2O = 3-deoxy-alpha-D-manno-2-octulosonate-8-phosphate + phosphate. Its pathway is carbohydrate biosynthesis; 3-deoxy-D-manno-octulosonate biosynthesis; 3-deoxy-D-manno-octulosonate from D-ribulose 5-phosphate: step 2/3. It functions in the pathway bacterial outer membrane biogenesis; lipopolysaccharide biosynthesis. This is 2-dehydro-3-deoxyphosphooctonate aldolase from Escherichia coli O6:K15:H31 (strain 536 / UPEC).